The chain runs to 157 residues: Phosphopantetheine adenylyltransferase (157 aa).

Thr10 lines the substrate pocket. ATP-binding positions include 10-11 (TF) and His18. The substrate site is built by Lys42, Leu74, and Arg88. ATP-binding positions include 89-91 (GLR), Glu99, and 124-130 (NAFISSS).

Belongs to the bacterial CoaD family. As to quaternary structure, homohexamer. Mg(2+) is required as a cofactor.

It is found in the cytoplasm. The enzyme catalyses (R)-4'-phosphopantetheine + ATP + H(+) = 3'-dephospho-CoA + diphosphate. It functions in the pathway cofactor biosynthesis; coenzyme A biosynthesis; CoA from (R)-pantothenate: step 4/5. In terms of biological role, reversibly transfers an adenylyl group from ATP to 4'-phosphopantetheine, yielding dephospho-CoA (dPCoA) and pyrophosphate. In Helicobacter pylori (strain P12), this protein is Phosphopantetheine adenylyltransferase.